Consider the following 276-residue polypeptide: MNTFRTTALMAVMIVLFALIGQALGGTGGMLLAFLIAVGMNGVSYWYSSSIVLRMYGAEEVSRAEAPELHDLVDRLRRRADLPMPKVCIIPQDQPNAFATGRNPDNAVVAVTKGIMDVLDRDELAGVIAHELAHIKNRDMLTSTVAATLAGAITMLSRFALFFGGRDNNFLVSLLMMILAPMAAMLIQSAISRSREYAADREGAEIAKNPLGLASALRSMERAAEHRPMPANQTTSHMFIVNPFSGGLSGIKRLFSTHPPTEERIARLEEMAGRAQ.

Residues 14–34 (IVLFALIGQALGGTGGMLLAF) traverse the membrane as a helical segment. Residue His-130 participates in Zn(2+) binding. Glu-131 is an active-site residue. Zn(2+) is bound at residue His-134. 2 helical membrane passes run 145-165 (VAATLAGAITMLSRFALFFGG) and 171-191 (LVSLLMMILAPMAAMLIQSAI). Glu-196 contributes to the Zn(2+) binding site.

Belongs to the peptidase M48B family. The cofactor is Zn(2+).

Its subcellular location is the cell inner membrane. The chain is Protease HtpX homolog from Salinibacter ruber (strain DSM 13855 / M31).